The primary structure comprises 122 residues: Prefoldin subunit 1 (122 aa).

A2 bears the N-acetylalanine mark.

The protein belongs to the prefoldin subunit beta family. Heterohexamer of two PFD-alpha type and four PFD-beta type subunits.

Functionally, binds specifically to cytosolic chaperonin (c-CPN) and transfers target proteins to it. Binds to nascent polypeptide chain and promotes folding in an environment in which there are many competing pathways for nonnative proteins. This Bos taurus (Bovine) protein is Prefoldin subunit 1 (PFDN1).